Reading from the N-terminus, the 361-residue chain is tRNA-specific 2-thiouridylase MnmA (361 aa).

Residues glycine 8–serine 15 and methionine 34 each bind ATP. Residues asparagine 94 to aspartate 96 are interaction with target base in tRNA. Cysteine 99 acts as the Nucleophile in catalysis. A disulfide bridge links cysteine 99 with cysteine 195. Glycine 123 is an ATP binding site. Positions lysine 145–glutamine 147 are interaction with tRNA. The active-site Cysteine persulfide intermediate is the cysteine 195. The tract at residues arginine 307 to tyrosine 308 is interaction with tRNA.

It belongs to the MnmA/TRMU family.

Its subcellular location is the cytoplasm. It carries out the reaction S-sulfanyl-L-cysteinyl-[protein] + uridine(34) in tRNA + AH2 + ATP = 2-thiouridine(34) in tRNA + L-cysteinyl-[protein] + A + AMP + diphosphate + H(+). Catalyzes the 2-thiolation of uridine at the wobble position (U34) of tRNA, leading to the formation of s(2)U34. The chain is tRNA-specific 2-thiouridylase MnmA from Legionella pneumophila subsp. pneumophila (strain Philadelphia 1 / ATCC 33152 / DSM 7513).